The following is a 146-amino-acid chain: 3-dehydroquinate dehydratase (146 aa).

The active-site Proton acceptor is the Y23. Substrate-binding residues include N74, H80, and D87. The Proton donor role is filled by H100. Substrate-binding positions include 101–102 (IS) and R111.

Belongs to the type-II 3-dehydroquinase family. In terms of assembly, homododecamer.

It carries out the reaction 3-dehydroquinate = 3-dehydroshikimate + H2O. It participates in metabolic intermediate biosynthesis; chorismate biosynthesis; chorismate from D-erythrose 4-phosphate and phosphoenolpyruvate: step 3/7. Functionally, catalyzes a trans-dehydration via an enolate intermediate. The protein is 3-dehydroquinate dehydratase of Bacillus cereus (strain B4264).